Here is a 343-residue protein sequence, read N- to C-terminus: 2,3,4,5-tetrahydropyridine-2,6-dicarboxylate N-succinyltransferase (343 aa).

Position 204 (Glu204) interacts with Mg(2+). Glu220 serves as the catalytic Acyl-anhydride intermediate. Succinyl-CoA contacts are provided by residues Arg222, Gly237, Ser240, Ala263, Glu278–Ser279, Gly286, Lys303, and Arg316–Ser319.

It belongs to the type 2 tetrahydrodipicolinate N-succinyltransferase family. As to quaternary structure, homotrimer.

The protein resides in the cytoplasm. It carries out the reaction (S)-2,3,4,5-tetrahydrodipicolinate + succinyl-CoA + H2O = (S)-2-succinylamino-6-oxoheptanedioate + CoA. The protein operates within amino-acid biosynthesis; L-lysine biosynthesis via DAP pathway; LL-2,6-diaminopimelate from (S)-tetrahydrodipicolinate (succinylase route): step 1/3. In terms of biological role, catalyzes the conversion of the cyclic tetrahydrodipicolinate (THDP) into the acyclic N-succinyl-L-2-amino-6-oxopimelate using succinyl-CoA. This chain is 2,3,4,5-tetrahydropyridine-2,6-dicarboxylate N-succinyltransferase, found in Vibrio cholerae serotype O1 (strain ATCC 39315 / El Tor Inaba N16961).